Consider the following 544-residue polypeptide: MIFGELRRLYLIIGVMLSYGLDELIPKTRLTLPLRLGRNLLFWMPNNHAQRMLGERLRLALQELGPVWIKFGQMLSTRRDLFPPAIADQLAMLQDRVQPFDGALARAHIERSMGQPLETWFDDFQQEPLASASIAQVHTARLKNGQEVVIKVIRPDILPMIKADMRLMYRLASWVPHLLPDGRRLRPVEVVLEYEKTLLDELNLLREAANAIQLRRNFDGSPMLYIPEVYPDYCSETMMVMERIYGVPVNDVAALEKQGTNMKLLAERGVQVFFTQVFRDSFFHGDMHPGNIFVSFEHPENPQYIGIDCGIVGSLNKEDKRYLAENFIAFFNRDYRKVAELHVDSGWVPPDTNVEDFEFAIRTVCEPIFEKPLAEISFGHVLLNLFNTARRFNMEVQPQLVLLQKTLLYIEGVGRQLYPQLDLWKTAKPFLEEWIKDQMGLPAILRALKEKAPYWAEKLPELPELVYDGFKQHRLLQKSVDRLTVEMRVHHVRQSQSRFLFGIGATLLLIGTFLMTQGADEGSLPAWLMAAGTVSWIIGWKRTA.

A helical transmembrane segment spans residues 1–21 (MIFGELRRLYLIIGVMLSYGL). Positions 123–500 (DFQQEPLASA…HVRQSQSRFL (378 aa)) constitute a Protein kinase domain. Residues 129 to 137 (LASASIAQV) and Lys151 each bind ATP. The active-site Proton acceptor is Asp286. 2 helical membrane-spanning segments follow: residues 499–519 (FLFG…TQGA) and 520–540 (DEGS…IIGW).

This sequence belongs to the ABC1 family. UbiB subfamily.

Its subcellular location is the cell inner membrane. Its pathway is cofactor biosynthesis; ubiquinone biosynthesis [regulation]. Functionally, is probably a protein kinase regulator of UbiI activity which is involved in aerobic coenzyme Q (ubiquinone) biosynthesis. This is Probable protein kinase UbiB from Sodalis glossinidius (strain morsitans).